We begin with the raw amino-acid sequence, 231 residues long: Axial regulator YABBY 4 (231 aa).

The C4-type zinc-finger motif lies at 26-53 (CGFCTTILLVSVPFTSLSMVVTVRCGHC). Disordered stretches follow at residues 98–120 (KVNQEKENSPTTLVSSSDNEDED) and 211–231 (NNGFRERKAQRHSIWGKSPFE).

This sequence belongs to the YABBY family. In terms of assembly, interacts with SPL/NZZ.

It localises to the nucleus. Its function is as follows. Essential for the formation and the abaxial-adaxial asymmetric growth of the ovule outer integument. In Arabidopsis thaliana (Mouse-ear cress), this protein is Axial regulator YABBY 4 (YAB4).